The primary structure comprises 161 residues: Nucleotide-binding protein LHK_01423 (161 aa).

It belongs to the YajQ family.

Nucleotide-binding protein. This Laribacter hongkongensis (strain HLHK9) protein is Nucleotide-binding protein LHK_01423.